The primary structure comprises 155 residues: Interleukin-2 (155 aa).

The N-terminal stretch at 1 to 20 (MYKIQLLSCIALTLALVANG) is a signal peptide. Thr23 carries O-linked (GalNAc...) threonine glycosylation. Cys79 and Cys127 form a disulfide bridge.

It belongs to the IL-2 family.

Its subcellular location is the secreted. Functionally, cytokine produced by activated CD4-positive helper T-cells and to a lesser extend activated CD8-positive T-cells and natural killer (NK) cells that plays pivotal roles in the immune response and tolerance. Binds to a receptor complex composed of either the high-affinity trimeric IL-2R (IL2RA/CD25, IL2RB/CD122 and IL2RG/CD132) or the low-affinity dimeric IL-2R (IL2RB and IL2RG). Interaction with the receptor leads to oligomerization and conformation changes in the IL-2R subunits resulting in downstream signaling starting with phosphorylation of JAK1 and JAK3. In turn, JAK1 and JAK3 phosphorylate the receptor to form a docking site leading to the phosphorylation of several substrates including STAT5. This process leads to activation of several pathways including STAT, phosphoinositide-3-kinase/PI3K and mitogen-activated protein kinase/MAPK pathways. Functions as a T-cell growth factor and can increase NK-cell cytolytic activity as well. Promotes strong proliferation of activated B-cells and subsequently immunoglobulin production. Plays a pivotal role in regulating the adaptive immune system by controlling the survival and proliferation of regulatory T-cells, which are required for the maintenance of immune tolerance. Moreover, participates in the differentiation and homeostasis of effector T-cell subsets, including Th1, Th2, Th17 as well as memory CD8-positive T-cells. The protein is Interleukin-2 (IL2) of Bos taurus (Bovine).